We begin with the raw amino-acid sequence, 363 residues long: Peptide chain release factor 2 (363 aa).

Glutamine 251 is modified (N5-methylglutamine).

This sequence belongs to the prokaryotic/mitochondrial release factor family. Post-translationally, methylated by PrmC. Methylation increases the termination efficiency of RF2.

It is found in the cytoplasm. Functionally, peptide chain release factor 2 directs the termination of translation in response to the peptide chain termination codons UGA and UAA. This is Peptide chain release factor 2 (prfB) from Helicobacter pylori (strain J99 / ATCC 700824) (Campylobacter pylori J99).